The primary structure comprises 251 residues: Putative (5-formylfuran-3-yl)methyl phosphate synthase (251 aa).

Lysine 29 serves as the catalytic Schiff-base intermediate with substrate. Lysine 87 serves as the catalytic Proton acceptor.

It belongs to the MfnB family.

The catalysed reaction is 2 D-glyceraldehyde 3-phosphate = 4-(hydroxymethyl)-2-furancarboxaldehyde phosphate + phosphate + 2 H2O. Functionally, catalyzes the formation of 4-(hydroxymethyl)-2-furancarboxaldehyde phosphate (4-HFC-P) from two molecules of glyceraldehyde-3-P (GA-3-P). This Kitasatospora aureofaciens (Streptomyces aureofaciens) protein is Putative (5-formylfuran-3-yl)methyl phosphate synthase.